A 356-amino-acid chain; its full sequence is Outer spore wall protein LDS2 (356 aa).

The Cytoplasmic segment spans residues 1–92 (MSTRPQPDWY…ISESVGNSDY (92 aa)). A helical membrane pass occupies residues 93 to 113 (LHLFFLIFGYYLLNLLLIVAF). At 114 to 115 (TS) the chain is on the extracellular side. The chain crosses the membrane as a helical span at residues 116–136 (ILAWSLLVCIYLPFLGLFALP). Over 137–213 (LAYMQTILIS…KRFYLVSLPQ (77 aa)) the chain is Cytoplasmic. The helical transmembrane segment at 214–234 (FFIFFFWYIFIAFMFLLLLLV) threads the bilayer. Over 235-294 (PIVGPITINMLPFSPGMGFYYFEPYFVDVLHLDSRKLSKVYYKGFAKWLLYSISSGLLES) the chain is Extracellular. A helical membrane pass occupies residues 295 to 315 (IPILGGLFIGTNAVGASLWIV). Residues 316 to 356 (KEIKDRDQPAVPPSPPAEPEEPTVGSYAPPIQQSIAHINPP) are Cytoplasmic-facing. Residues 322–356 (DQPAVPPSPPAEPEEPTVGSYAPPIQQSIAHINPP) are disordered. Polar residues predominate over residues 346 to 356 (IQQSIAHINPP).

The protein belongs to the LDS family.

The protein resides in the prospore membrane. The protein localises to the lipid droplet. It is found in the spore wall. Involved in spore wall assembly. The sequence is that of Outer spore wall protein LDS2 from Saccharomyces cerevisiae (strain ATCC 204508 / S288c) (Baker's yeast).